The chain runs to 115 residues: Androgen-binding protein homolog (115 aa).

An N-terminal signal peptide occupies residues 1-23 (MKGTLLLLALLVTGELGFQTTEA).

This sequence belongs to the secretoglobin family.

It is found in the secreted. The sequence is that of Androgen-binding protein homolog from Mesocricetus auratus (Golden hamster).